Consider the following 206-residue polypeptide: Small ribosomal subunit protein uS4B (206 aa).

One can recognise an S4 RNA-binding domain in the interval 96–156 (GRLDNVVYRM…EKAKKQSRIG (61 aa)).

The protein belongs to the universal ribosomal protein uS4 family. Part of the 30S ribosomal subunit. Contacts protein S5. The interaction surface between S4 and S5 is involved in control of translational fidelity.

In terms of biological role, one of the primary rRNA binding proteins, it binds directly to 16S rRNA where it nucleates assembly of the body of the 30S subunit. With S5 and S12 plays an important role in translational accuracy. The protein is Small ribosomal subunit protein uS4B of Psychromonas ingrahamii (strain DSM 17664 / CCUG 51855 / 37).